Consider the following 776-residue polypeptide: Endonuclease MutS2 (776 aa).

G328–T335 serves as a coordination point for ATP. Residues L701–K776 form the Smr domain.

Belongs to the DNA mismatch repair MutS family. MutS2 subfamily. As to quaternary structure, homodimer. Binds to stalled ribosomes, contacting rRNA.

Endonuclease that is involved in the suppression of homologous recombination and thus may have a key role in the control of bacterial genetic diversity. In terms of biological role, acts as a ribosome collision sensor, splitting the ribosome into its 2 subunits. Detects stalled/collided 70S ribosomes which it binds and splits by an ATP-hydrolysis driven conformational change. Acts upstream of the ribosome quality control system (RQC), a ribosome-associated complex that mediates the extraction of incompletely synthesized nascent chains from stalled ribosomes and their subsequent degradation. Probably generates substrates for RQC. This chain is Endonuclease MutS2, found in Streptococcus mutans serotype c (strain ATCC 700610 / UA159).